Reading from the N-terminus, the 43-residue chain is Phi-Lf prophage-derived putative minor coat protein (43 aa).

The chain is Phi-Lf prophage-derived putative minor coat protein (gVII-1) from Xanthomonas campestris pv. campestris (strain ATCC 33913 / DSM 3586 / NCPPB 528 / LMG 568 / P 25).